The primary structure comprises 287 residues: mRNA-capping enzyme small subunit (287 aa).

As to quaternary structure, heterodimer of a large and a small subunit.

It is found in the virion. It catalyses the reaction a 5'-end (5'-triphosphoguanosine)-ribonucleoside in mRNA + S-adenosyl-L-methionine = a 5'-end (N(7)-methyl 5'-triphosphoguanosine)-ribonucleoside in mRNA + S-adenosyl-L-homocysteine. In terms of biological role, catalyzes the last reaction in the mRNA cap formation pathway. This chain is mRNA-capping enzyme small subunit, found in Erythrocebus patas (Red guenon).